A 72-amino-acid chain; its full sequence is Conotoxin Gla(2)-TxVI/A (72 aa).

Residues Met1 to Ala19 form the signal peptide. The propeptide occupies Leu20 to Gln44. Cystine bridges form between Cys48–Cys62, Cys55–Cys66, and Cys61–Cys70. 4-carboxyglutamate is present on Glu56. Residue Pro58 is modified to 4-hydroxyproline. Residue Ser71 is modified to Serine amide.

This sequence belongs to the conotoxin O2 superfamily. Brominated at one of the Trp residues. As to expression, expressed by the venom duct.

It is found in the secreted. The sequence is that of Conotoxin Gla(2)-TxVI/A from Conus textile (Cloth-of-gold cone).